The chain runs to 177 residues: Large ribosomal subunit protein uL6 (177 aa).

The protein belongs to the universal ribosomal protein uL6 family. Part of the 50S ribosomal subunit.

This protein binds to the 23S rRNA, and is important in its secondary structure. It is located near the subunit interface in the base of the L7/L12 stalk, and near the tRNA binding site of the peptidyltransferase center. The protein is Large ribosomal subunit protein uL6 of Salmonella arizonae (strain ATCC BAA-731 / CDC346-86 / RSK2980).